Reading from the N-terminus, the 170-residue chain is Peptide deformylase (170 aa).

Positions 88 and 130 each coordinate Fe cation. The active site involves Glu131. Residue His134 coordinates Fe cation.

It belongs to the polypeptide deformylase family. The cofactor is Fe(2+).

It carries out the reaction N-terminal N-formyl-L-methionyl-[peptide] + H2O = N-terminal L-methionyl-[peptide] + formate. Its function is as follows. Removes the formyl group from the N-terminal Met of newly synthesized proteins. Requires at least a dipeptide for an efficient rate of reaction. N-terminal L-methionine is a prerequisite for activity but the enzyme has broad specificity at other positions. This Acetivibrio thermocellus (strain ATCC 27405 / DSM 1237 / JCM 9322 / NBRC 103400 / NCIMB 10682 / NRRL B-4536 / VPI 7372) (Clostridium thermocellum) protein is Peptide deformylase.